Reading from the N-terminus, the 284-residue chain is Bifunctional protein FolD (284 aa).

Residues 165–167 (GRS) and S190 each bind NADP(+).

It belongs to the tetrahydrofolate dehydrogenase/cyclohydrolase family. Homodimer.

The catalysed reaction is (6R)-5,10-methylene-5,6,7,8-tetrahydrofolate + NADP(+) = (6R)-5,10-methenyltetrahydrofolate + NADPH. It catalyses the reaction (6R)-5,10-methenyltetrahydrofolate + H2O = (6R)-10-formyltetrahydrofolate + H(+). It participates in one-carbon metabolism; tetrahydrofolate interconversion. Its function is as follows. Catalyzes the oxidation of 5,10-methylenetetrahydrofolate to 5,10-methenyltetrahydrofolate and then the hydrolysis of 5,10-methenyltetrahydrofolate to 10-formyltetrahydrofolate. This is Bifunctional protein FolD from Streptococcus agalactiae serotype Ia (strain ATCC 27591 / A909 / CDC SS700).